The primary structure comprises 394 residues: Elongation factor Tu (394 aa).

One can recognise a tr-type G domain in the interval 10–204; sequence KEHVNVGTIG…AVDTYIENPV (195 aa). Residues 19 to 26 are G1; the sequence is GHVDHGKT. 19-26 contacts GTP; the sequence is GHVDHGKT. Threonine 26 contacts Mg(2+). The G2 stretch occupies residues 60–64; that stretch reads GITIN. A G3 region spans residues 81–84; it reads DCPG. Residues 81-85 and 136-139 each bind GTP; these read DCPGH and NKCD. The segment at 136–139 is G4; it reads NKCD. The interval 174 to 176 is G5; that stretch reads SAL.

Belongs to the TRAFAC class translation factor GTPase superfamily. Classic translation factor GTPase family. EF-Tu/EF-1A subfamily. As to quaternary structure, monomer.

It is found in the cytoplasm. It carries out the reaction GTP + H2O = GDP + phosphate + H(+). Functionally, GTP hydrolase that promotes the GTP-dependent binding of aminoacyl-tRNA to the A-site of ribosomes during protein biosynthesis. The sequence is that of Elongation factor Tu from Mycoplasmopsis synoviae (strain 53) (Mycoplasma synoviae).